The following is a 401-amino-acid chain: Collagen and calcium-binding EGF domain-containing protein 1 (401 aa).

The signal sequence occupies residues 1–22 (MIYPGRGASLSVAVALVLFSSG). An EGF-like; calcium-binding domain is found at 126–167 (DIDECANNNETVCSQMCVNTPGSYRCDCHSGFYLEDDGKTCT). 3 disulfide bridges follow: Cys-130/Cys-142, Cys-138/Cys-151, and Cys-153/Cys-166. Residue Asn-134 is glycosylated (N-linked (GlcNAc...) asparagine). 2 disordered regions span residues 229–321 (TTNS…PGSF) and 344–401 (SRPL…DWPV). Collagen-like domains follow at residues 234-276 (LPGP…PIGP) and 286-319 (GRRG…GPPG). Over residues 235–244 (PGPPGPPGPA) the composition is skewed to pro residues. The span at 246-258 (TPGAKGSSGSPGQ) shows a compositional bias: low complexity.

Belongs to the CCBE1 family. Not expressed in blood or lymphatic endothelial cells, correlating spatially and temporally with the migration routes of endothelial cells that bud from the PCV, migrate in association with somite boundaries and seed the horizontal myoseptum region from where lymphatic precursors later migrate.

The protein localises to the secreted. Its function is as follows. Required for lymphangioblast budding and angiogenic sprouting from venous endothelium during embryogenesis. Required for the formation of facial lymphatic structures. Necessary for lymphangiogenesis, but is probably not part of either the vegfc-vegfr3 signaling or sox18-prox1 transcriptional pathways. The sequence is that of Collagen and calcium-binding EGF domain-containing protein 1 (ccbe1) from Danio rerio (Zebrafish).